The chain runs to 701 residues: Polyribonucleotide nucleotidyltransferase (701 aa).

The Mg(2+) site is built by D487 and D493. A KH domain is found at 554-613 (PTMIAMKIDTDKIRDVIGKGGATIRAICEETKASIDIEDDGSIKIFGETKEAAEAARQRV). Residues 623-691 (GKIYVGKVER…NRGRIKLSIK (69 aa)) enclose the S1 motif domain.

It belongs to the polyribonucleotide nucleotidyltransferase family. In terms of assembly, component of the RNA degradosome, which is a multiprotein complex involved in RNA processing and mRNA degradation. Requires Mg(2+) as cofactor.

It is found in the cytoplasm. It carries out the reaction RNA(n+1) + phosphate = RNA(n) + a ribonucleoside 5'-diphosphate. Functionally, involved in mRNA degradation. Catalyzes the phosphorolysis of single-stranded polyribonucleotides processively in the 3'- to 5'-direction. The polypeptide is Polyribonucleotide nucleotidyltransferase (Pseudomonas fluorescens (strain SBW25)).